The chain runs to 281 residues: Ribosomal protein L11 methyltransferase (281 aa).

Residues Thr133, Gly154, Asp175, and Asn216 each coordinate S-adenosyl-L-methionine.

The protein belongs to the methyltransferase superfamily. PrmA family.

Its subcellular location is the cytoplasm. It catalyses the reaction L-lysyl-[protein] + 3 S-adenosyl-L-methionine = N(6),N(6),N(6)-trimethyl-L-lysyl-[protein] + 3 S-adenosyl-L-homocysteine + 3 H(+). Its function is as follows. Methylates ribosomal protein L11. The chain is Ribosomal protein L11 methyltransferase from Campylobacter jejuni subsp. jejuni serotype O:23/36 (strain 81-176).